The sequence spans 475 residues: tRNA-2-methylthio-N(6)-dimethylallyladenosine synthase (475 aa).

Positions 1-10 (MHETTLKREG) are enriched in basic and acidic residues. The segment at 1–25 (MHETTLKREGASTPSNPTPSTHAAG) is disordered. Over residues 12 to 23 (STPSNPTPSTHA) the composition is skewed to polar residues. In terms of domain architecture, MTTase N-terminal spans 27-144 (GKIYIRTFGC…LPELIRRRRD (118 aa)). Residues Cys36, Cys73, Cys107, Cys181, Cys185, and Cys188 each coordinate [4Fe-4S] cluster. Residues 167–400 (RVEGATAFVS…QALINEQAAA (234 aa)) form the Radical SAM core domain. Positions 403–466 (QSMVGTRQRL…TNSLRGRVAG (64 aa)) constitute a TRAM domain.

Belongs to the methylthiotransferase family. MiaB subfamily. As to quaternary structure, monomer. [4Fe-4S] cluster is required as a cofactor.

It localises to the cytoplasm. The enzyme catalyses N(6)-dimethylallyladenosine(37) in tRNA + (sulfur carrier)-SH + AH2 + 2 S-adenosyl-L-methionine = 2-methylsulfanyl-N(6)-dimethylallyladenosine(37) in tRNA + (sulfur carrier)-H + 5'-deoxyadenosine + L-methionine + A + S-adenosyl-L-homocysteine + 2 H(+). In terms of biological role, catalyzes the methylthiolation of N6-(dimethylallyl)adenosine (i(6)A), leading to the formation of 2-methylthio-N6-(dimethylallyl)adenosine (ms(2)i(6)A) at position 37 in tRNAs that read codons beginning with uridine. The polypeptide is tRNA-2-methylthio-N(6)-dimethylallyladenosine synthase (Bordetella avium (strain 197N)).